Here is a 138-residue protein sequence, read N- to C-terminus: Large ribosomal subunit protein uL14 (138 aa).

Belongs to the universal ribosomal protein uL14 family. As to quaternary structure, part of the 50S ribosomal subunit. Forms a cluster with proteins L3 and L24e, part of which may contact the 16S rRNA in 2 intersubunit bridges.

In terms of biological role, binds to 23S rRNA. Forms part of two intersubunit bridges in the 70S ribosome. The protein is Large ribosomal subunit protein uL14 of Metallosphaera sedula (strain ATCC 51363 / DSM 5348 / JCM 9185 / NBRC 15509 / TH2).